The following is a 127-amino-acid chain: Cyclin-dependent kinase 2-associated protein 2 (127 aa).

Residues 1-47 (MSYKPIAPAPSSTPGSSTPGPGTPVPTAGSVPSPSGSVPGAAAPFRP) are disordered. Residues 9–44 (APSSTPGSSTPGPGTPVPTAGSVPSPSGSVPGAAAP) are compositionally biased toward low complexity. The interaction with CDK2 stretch occupies residues 65–107 (PPGSQGSQSTYTDLLSVIEEMGKEIRPTYAGSKSAMERLKRGI).

This sequence belongs to the CDK2AP family. As to quaternary structure, component of the nucleosome remodeling and deacetylase (NuRD) repressor complex, composed of core proteins MTA1, MTA2, MTA3, RBBP4, RBBP7, HDAC1, HDAC2, MBD2, MBD3, and peripherally associated proteins CDK2AP1, CDK2AP2, GATAD2A, GATAD2B, CHD3, CHD4 and CHD5. The exact stoichiometry of the NuRD complex is unknown, and some subunits such as MBD2 and MBD3, GATAD2A and GATAD2B, and CHD3, CHD4 and CHD5 define mutually exclusive NuRD complexes. Interacts with CDK2AP1. Interacts with CDK2. Interacts with MAPK1. In terms of processing, phosphorylated by MAPK1 and CDK2. In terms of tissue distribution, oocytes (at protein level).

Its subcellular location is the cytoplasm. The protein localises to the nucleus. Functionally, acts as a component of the histone deacetylase NuRD complex which participates in the remodeling of chromatin. Inhibits cell cycle G1/S phase transition by repressing CDK2 expression and activation; represses CDK2 activation by inhibiting its interaction with cyclin E and A. Plays a role in regulating the self-renewal of embryonic stem cells (ESCs) and in maintaining cell survival during terminal differentiation of ESCs. Regulates microtubule organization of metaphase II oocytes. This is Cyclin-dependent kinase 2-associated protein 2 (Cdk2ap2) from Mus musculus (Mouse).